The following is a 602-amino-acid chain: MTTISQKFIRNFSIIAHIDHGKSTLADRFIQLCGGLSEREMKAQVLDSMDIERERGITIKAQSVTLNFKSQDGHFYQLNFIDTPGHVDFSYEVSRSLAACEGALLVVDAAQGVEAQTVATCYTAIEQGLVVLPVLNKIDLPQADPERVIQEIEDVIGIEAHDAIRVSAKEGRCVKELLEQLVVAIPPPVGDPEAPLQALIIDSWFDSYLGVVSLVRVKAGTLRKGDKIRVMSTGKDYYADQIGHFTPKRQPLEELSAGAVGFVVAGIKDIFGAPVGDTLTHAKQSAGSPLPGFKQVKPQVFAGLFPINSEEYEPFREALAKLQLNDAALFYEPESSEALGFGFRCGFLGMLHMEIVQERLEREYNLELITTAPTVSYEILTKQGEMLYVDNPSHLPEPGKIGEIREPIAVANILVPPTYLGAVITLCVEKRGVQKKLLYLSNQVSMTYEIPLSEVVLDFFDRLKSASRGYASLDYSFNHFQAADLVKLDILISGQKVDALATIVHRDLAYTRGRELTERLKDLIPRQMFEVAIQAAIGAKIIARTSVKALRKNVTAKCYGGDITRKRKLLEKQKAGKKRMKQVGKVAIPQEAFLAVLRVKNE.

Residues 7–189 (KFIRNFSIIA…QLVVAIPPPV (183 aa)) enclose the tr-type G domain. GTP-binding positions include 19–24 (DHGKST) and 136–139 (NKID).

The protein belongs to the TRAFAC class translation factor GTPase superfamily. Classic translation factor GTPase family. LepA subfamily.

Its subcellular location is the cell inner membrane. It carries out the reaction GTP + H2O = GDP + phosphate + H(+). Functionally, required for accurate and efficient protein synthesis under certain stress conditions. May act as a fidelity factor of the translation reaction, by catalyzing a one-codon backward translocation of tRNAs on improperly translocated ribosomes. Back-translocation proceeds from a post-translocation (POST) complex to a pre-translocation (PRE) complex, thus giving elongation factor G a second chance to translocate the tRNAs correctly. Binds to ribosomes in a GTP-dependent manner. This chain is Elongation factor 4, found in Coxiella burnetii (strain Dugway 5J108-111).